The chain runs to 199 residues: 7-methyl-GTP pyrophosphatase (199 aa).

The active-site Proton acceptor is the D74.

Belongs to the Maf family. YceF subfamily. A divalent metal cation is required as a cofactor.

Its subcellular location is the cytoplasm. It catalyses the reaction N(7)-methyl-GTP + H2O = N(7)-methyl-GMP + diphosphate + H(+). Nucleoside triphosphate pyrophosphatase that hydrolyzes 7-methyl-GTP (m(7)GTP). May have a dual role in cell division arrest and in preventing the incorporation of modified nucleotides into cellular nucleic acids. The chain is 7-methyl-GTP pyrophosphatase from Cupriavidus pinatubonensis (strain JMP 134 / LMG 1197) (Cupriavidus necator (strain JMP 134)).